Reading from the N-terminus, the 340-residue chain is Hydroxyurea phosphotransferase (340 aa).

Asp-240 acts as the Proton acceptor in catalysis.

This sequence belongs to the aminoglycoside phosphotransferase family.

Potential phosphotransferase that inactivates hydroxyurea by phosphorylation of the hydroxy group in the hydroxylamine moiety. The protein is Hydroxyurea phosphotransferase (hur) of Kitasatospora aureofaciens (Streptomyces aureofaciens).